Consider the following 358-residue polypeptide: Methylthioribose-1-phosphate isomerase (358 aa).

Substrate is bound by residues 54-56, arginine 96, and glutamine 205; that span reads RGA. Residue aspartate 246 is the Proton donor of the active site. Residue 256 to 257 coordinates substrate; it reads NK.

The protein belongs to the eIF-2B alpha/beta/delta subunits family. MtnA subfamily.

It carries out the reaction 5-(methylsulfanyl)-alpha-D-ribose 1-phosphate = 5-(methylsulfanyl)-D-ribulose 1-phosphate. It participates in amino-acid biosynthesis; L-methionine biosynthesis via salvage pathway; L-methionine from S-methyl-5-thio-alpha-D-ribose 1-phosphate: step 1/6. In terms of biological role, catalyzes the interconversion of methylthioribose-1-phosphate (MTR-1-P) into methylthioribulose-1-phosphate (MTRu-1-P). The chain is Methylthioribose-1-phosphate isomerase from Pseudomonas syringae pv. tomato (strain ATCC BAA-871 / DC3000).